Consider the following 214-residue polypeptide: EEF1A lysine methyltransferase 1 (214 aa).

Ser2 bears the N-acetylserine mark. Residue Ser2 is modified to Phosphoserine.

The protein belongs to the class I-like SAM-binding methyltransferase superfamily. EFM5 family.

It localises to the cytoplasm. The catalysed reaction is L-lysyl-[protein] + 3 S-adenosyl-L-methionine = N(6),N(6),N(6)-trimethyl-L-lysyl-[protein] + 3 S-adenosyl-L-homocysteine + 3 H(+). Protein-lysine methyltransferase that selectively catalyzes the trimethylation of EEF1A at 'Lys-79'. The chain is EEF1A lysine methyltransferase 1 from Mus musculus (Mouse).